Here is a 150-residue protein sequence, read N- to C-terminus: UPF0178 protein Sbal223_2514 (150 aa).

Belongs to the UPF0178 family.

This Shewanella baltica (strain OS223) protein is UPF0178 protein Sbal223_2514.